A 294-amino-acid polypeptide reads, in one-letter code: Lycopene elongase/hydratase (294 aa).

Transmembrane regions (helical) follow at residues 31-51, 53-73, 115-135, 160-180, 182-202, 222-242, 243-263, and 274-294; these read FWLYLGGPVIVGVSYAADGPG, LFSPLAIALFLYFTIPGNVFL, LALLFALVLPTLGIVALLAWM, GLYILPGVIGYAAIEGVAPPA, AVVGAWLWAMGMHTFSAIPDI, TYYYCVMCWLMAAFVFNFTHW, VFGVLLLVYPGLVFGILGVGV, and AINTVVGMVFTLIALWVMLYG.

It belongs to the UbiA prenyltransferase family.

It is found in the cell membrane. It carries out the reaction all-trans-lycopene + dimethylallyl diphosphate + H2O = dihydroisopentenyldehydrorhodopin + diphosphate. It catalyses the reaction isopentenyldehydrorhodopin + dimethylallyl diphosphate + H2O = dihydrobisanhydrobacterioruberin + diphosphate. It participates in carotenoid biosynthesis. In terms of biological role, involved in the biosynthesis of the acyclic C50 carotenoid bacterioruberin (BR). Acts as a bifunctional elongase/hydratase that catalyzes the elongation of lycopene by attaching a C(5) isoprene unit at C-2, as well as the hydroxylation of the previous end of the molecule. The enzyme acts at both ends of the substrate, and catalyzes the conversion of lycopene to the C(45) intermediate dihydroisopentenyldehydrorhodopin (DH-IDR) and the conversion of isopentenyldehydrorhodopin (IDR) to the C(50) carotenoid dihydrobisanhydrobacterioruberin (DH-BABR). Can also catalyze the conversion of lycopene to tetrahydrobisanhydrobacterioruberin (TH-BABR). The polypeptide is Lycopene elongase/hydratase (Haloarcula japonica (strain ATCC 49778 / DSM 6131 / JCM 7785 / NBRC 101032 / NCIMB 13157 / TR-1)).